The chain runs to 297 residues: SATFSHGSFCYIPPDTHCPLELSTYFRINNKESGQFERTLIIADKNSYVSYLEGCTAPQFDNNQLHAAVVELVALENATIKYSTVQNWYAGNEKGQGGIYNFVTKRGICIGNNSKILWTQVETGSAITWKYPSCILAGHNSIGEFSSIALTNNYQQADTGSKMIHIGKNTKSRILSKGISAGYSANSYRGLVKIGPKAHYSRNYSQCDSLLLSNTSKANTFPYIQAQNPYTKIEHEASTSKIGEEQIFYFLQRGINLENAISLMISGFCKEVLNELPMEFAVEADRLLNLKLEGTVG.

It belongs to the iron-sulfur cluster assembly SufBD family.

The protein localises to the plastid. It is found in the chloroplast. In Antithamnion sp. (Red alga), this protein is Iron-sulfur cluster assembly SufBD family protein ycf24 (ycf24).